The chain runs to 321 residues: Cytochrome f (321 aa).

The N-terminal stretch at 1–35 (MQNRKTYDDWVKKWITQSISVLIMIDIMTRTSIAN) is a signal peptide. Heme-binding residues include Tyr-37, Cys-57, Cys-60, and His-61. A helical membrane pass occupies residues 287–307 (VQGLLLFLASVVLAQIFLVLK).

The protein belongs to the cytochrome f family. In terms of assembly, the 4 large subunits of the cytochrome b6-f complex are cytochrome b6, subunit IV (17 kDa polypeptide, petD), cytochrome f and the Rieske protein, while the 4 small subunits are PetG, PetL, PetM and PetN. The complex functions as a dimer. The cofactor is heme.

It is found in the plastid. The protein localises to the chloroplast thylakoid membrane. Its function is as follows. Component of the cytochrome b6-f complex, which mediates electron transfer between photosystem II (PSII) and photosystem I (PSI), cyclic electron flow around PSI, and state transitions. This is Cytochrome f from Cryptomeria japonica (Japanese cedar).